Here is a 391-residue protein sequence, read N- to C-terminus: Autotransporter heptosyltransferase Aah (391 aa).

ADP-D-glycero-beta-D-manno-heptose is bound by residues Thr101, Leu102, and Gly103. The active-site Proton acceptor is Asp104. Residues Gln218, Thr220, Lys224, Arg251, Leu275, Gly296, and Glu320 each contribute to the ADP-D-glycero-beta-D-manno-heptose site. Fe(3+) is bound by residues Cys333, Cys336, Cys352, and Cys364.

Belongs to the glycosyltransferase 9 family. As to quaternary structure, homododecamer composed of 6 homodimers forming a ring. Fe(3+) is required as a cofactor.

The protein localises to the cytoplasm. It catalyses the reaction ADP-D-glycero-beta-D-manno-heptose + L-seryl-[protein] = O-(D-glycero-alpha-D-manno-heptosyl)-L-seryl-[protein] + ADP + H(+). It carries out the reaction ADP-L-glycero-beta-D-manno-heptose + L-seryl-[protein] = O-(L-glycero-alpha-D-manno-heptosyl)-L-seryl-[protein] + ADP + H(+). Its function is as follows. Glycosylates autotransporter AIDA-I. Catalyzes the addition of both L, D-heptose and D, D-heptose sugars. Probably by glycosylating AIDA-I, involved in bacteria adhesion to host mammalian cells. This is Autotransporter heptosyltransferase Aah from Escherichia coli.